A 348-amino-acid chain; its full sequence is Protein RecA (348 aa).

67-74 is a binding site for ATP; it reads GPESSGKT.

This sequence belongs to the RecA family.

It localises to the cytoplasm. In terms of biological role, can catalyze the hydrolysis of ATP in the presence of single-stranded DNA, the ATP-dependent uptake of single-stranded DNA by duplex DNA, and the ATP-dependent hybridization of homologous single-stranded DNAs. It interacts with LexA causing its activation and leading to its autocatalytic cleavage. The chain is Protein RecA from Cutibacterium acnes (Propionibacterium acnes).